Consider the following 445-residue polypeptide: Chromosomal replication initiator protein DnaA (445 aa).

The domain I, interacts with DnaA modulators stretch occupies residues Met1–Glu72. Residues Glu72 to Asn107 are domain II. The segment at Gln108–Ser324 is domain III, AAA+ region. Positions 152, 154, 155, and 156 each coordinate ATP. The tract at residues Lys325–Ser445 is domain IV, binds dsDNA.

The protein belongs to the DnaA family. In terms of assembly, oligomerizes as a right-handed, spiral filament on DNA at oriC.

The protein localises to the cytoplasm. Functionally, plays an essential role in the initiation and regulation of chromosomal replication. ATP-DnaA binds to the origin of replication (oriC) to initiate formation of the DNA replication initiation complex once per cell cycle. Binds the DnaA box (a 9 base pair repeat at the origin) and separates the double-stranded (ds)DNA. Forms a right-handed helical filament on oriC DNA; dsDNA binds to the exterior of the filament while single-stranded (ss)DNA is stabiized in the filament's interior. The ATP-DnaA-oriC complex binds and stabilizes one strand of the AT-rich DNA unwinding element (DUE), permitting loading of DNA polymerase. After initiation quickly degrades to an ADP-DnaA complex that is not apt for DNA replication. Binds acidic phospholipids. This is Chromosomal replication initiator protein DnaA from Macrococcus caseolyticus (strain JCSC5402) (Macrococcoides caseolyticum).